A 264-amino-acid chain; its full sequence is Thiazole synthase (264 aa).

Lysine 101 serves as the catalytic Schiff-base intermediate with DXP. Residues glycine 162, 189 to 190 (AG), and 211 to 212 (NT) each bind 1-deoxy-D-xylulose 5-phosphate. The disordered stretch occupies residues 245–264 (KRQTASPSTPTLGQPFWHNQ).

This sequence belongs to the ThiG family. As to quaternary structure, homotetramer. Forms heterodimers with either ThiH or ThiS.

It localises to the cytoplasm. The catalysed reaction is [ThiS sulfur-carrier protein]-C-terminal-Gly-aminoethanethioate + 2-iminoacetate + 1-deoxy-D-xylulose 5-phosphate = [ThiS sulfur-carrier protein]-C-terminal Gly-Gly + 2-[(2R,5Z)-2-carboxy-4-methylthiazol-5(2H)-ylidene]ethyl phosphate + 2 H2O + H(+). It functions in the pathway cofactor biosynthesis; thiamine diphosphate biosynthesis. Its function is as follows. Catalyzes the rearrangement of 1-deoxy-D-xylulose 5-phosphate (DXP) to produce the thiazole phosphate moiety of thiamine. Sulfur is provided by the thiocarboxylate moiety of the carrier protein ThiS. In vitro, sulfur can be provided by H(2)S. This is Thiazole synthase from Cellvibrio japonicus (strain Ueda107) (Pseudomonas fluorescens subsp. cellulosa).